The chain runs to 550 residues: MGDSSELNVRRSVRDLQAEYDRGNRKPLEDLIRAWKGIQELPPDDKRSFFILGGYHGEPFDYRNAVDALPPDDIYTYWGGWCNHGNVLFPTWHRIYILKLEEALQSIVPGVTLPFWDETSEETVKKGIPDVLTREYFELDGENIKNPLYSYTLPLSLSDNVPGDNKAYEKPAGYETVRYPLSGLVGTPEARAATAKHNAKYPNPIENTQLLNKNIIAWLHGSGKDEEGPTTTDPNPKGRGVKWMYEKCLSAPNYTVFSNTTSAGQWNLDHPAKSVVALEQPHNDVHLAVGGFDIPGQGESGQVADANGDMGENNTAALDPIFFFHHCNVDRMFWLWQKQNGFINKLEVITGYYGTNSSDSQGPTPGIPPGTPLDLNTPLNPFIKDEFGNPFTSMDCINIEEQLGYTYGPGSLDEVPKPEPITGGSTKKLTVRGINRGLFDGSFVIRAYASVPDAQGQLTEYYLGDHAVLSRRNVVKCANCLTHLEVIAHFPLDTLSADLVDKAEYWITIQHRGHSKRMKVDKDTGQSEKALLAQRAELPEKLKYSISVTD.

Residues histidine 56, histidine 84, histidine 93, histidine 282, histidine 286, and histidine 326 each coordinate Cu cation.

It belongs to the tyrosinase family. Cu(2+) serves as cofactor.

The catalysed reaction is L-tyrosine + O2 = L-dopaquinone + H2O. The enzyme catalyses 2 L-tyrosine + O2 = 2 L-dopa. It catalyses the reaction 2 L-dopa + O2 = 2 L-dopaquinone + 2 H2O. Copper-containing oxidase that catalyzes the conversion of L-tyrosine to L-dopa and then to L-dopaquinone. Can use various phenols such as p-coumaric acid, phenol, pyrocatechol, syringol or pyrogallol. Accepts several of the constituents of lignin and potentially participates in lignin functionalization. The polypeptide is Tyrosinase HcTyr2 (Hahella sp. (strain CCB-MM4)).